The chain runs to 304 residues: Foldase protein PrsA (304 aa).

The first 19 residues, 1–19, serve as a signal peptide directing secretion; that stretch reads MKKKLLSVAAVASVFTLAA. Cys-20 carries N-palmitoyl cysteine lipidation. Cys-20 carries S-diacylglycerol cysteine lipidation. Residues 140 to 231 enclose the PpiC domain; the sequence is KVEVKASHIL…FGYHIIKVTD (92 aa). The tract at residues 285–304 is disordered; that stretch reads FDLDKQEQQQMQQQMQQQQQ. A compositionally biased stretch (low complexity) spans 292–304; it reads QQQMQQQMQQQQQ.

The protein belongs to the PrsA family.

Its subcellular location is the cell membrane. It carries out the reaction [protein]-peptidylproline (omega=180) = [protein]-peptidylproline (omega=0). Its function is as follows. Plays a major role in protein secretion by helping the post-translocational extracellular folding of several secreted proteins. The polypeptide is Foldase protein PrsA (Exiguobacterium sibiricum (strain DSM 17290 / CCUG 55495 / CIP 109462 / JCM 13490 / 255-15)).